Here is a 200-residue protein sequence, read N- to C-terminus: MKRKNNKFIEISIAFILGIALGLYGQNPDYFTNLISQKSLALSALQIKHYNISELSRSKVSTCFTPPAGCTKFIANQIDKAEESIYMQAYGMSDALITTALINAQARGVKVRILLDRSNLKQKFSKLHELQRAKIDVDIDKVPGIAHNKVIIIDKKKVITGSFNFTAAADKRNAENVIIIEDQELAESYLQNWLNRKASN.

Residues 1–25 form the signal peptide; sequence MKRKNNKFIEISIAFILGIALGLYG. Residues 142–169 enclose the PLD phosphodiesterase domain; it reads VPGIAHNKVIIIDKKKVITGSFNFTAAA. Active-site residues include histidine 147, lysine 149, and aspartate 154.

The protein belongs to the phospholipase D family. As to quaternary structure, homodimer.

The protein localises to the secreted. The enzyme catalyses a 1,2-diacyl-sn-glycero-3-phosphocholine + H2O = a 1,2-diacyl-sn-glycero-3-phosphate + choline + H(+). Its function is as follows. Could be a virulence factor. The chain is Phospholipase D (pld) from Rickettsia conorii (strain ATCC VR-613 / Malish 7).